The sequence spans 290 residues: 4-hydroxy-tetrahydrodipicolinate synthase (290 aa).

Residue Thr-48 coordinates pyruvate. The active-site Proton donor/acceptor is Tyr-137. Lys-165 serves as the catalytic Schiff-base intermediate with substrate. Pyruvate is bound at residue Ile-206.

Belongs to the DapA family. Homotetramer; dimer of dimers.

It localises to the cytoplasm. The catalysed reaction is L-aspartate 4-semialdehyde + pyruvate = (2S,4S)-4-hydroxy-2,3,4,5-tetrahydrodipicolinate + H2O + H(+). It participates in amino-acid biosynthesis; L-lysine biosynthesis via DAP pathway; (S)-tetrahydrodipicolinate from L-aspartate: step 3/4. Its function is as follows. Catalyzes the condensation of (S)-aspartate-beta-semialdehyde [(S)-ASA] and pyruvate to 4-hydroxy-tetrahydrodipicolinate (HTPA). The protein is 4-hydroxy-tetrahydrodipicolinate synthase of Enterococcus faecalis (strain ATCC 700802 / V583).